A 222-amino-acid chain; its full sequence is Transmembrane protein 114 (222 aa).

The chain crosses the membrane as a helical span at residues 7 to 27 (ALAGAAALSGALSFVLLAAAI). N-linked (GlcNAc...) asparagine glycans are attached at residues Asn54 and Asn88. 3 helical membrane-spanning segments follow: residues 105-125 (FVIL…TGFL), 133-153 (LLLL…LTGI), and 188-208 (LALG…FLAA).

Its subcellular location is the cell junction. It localises to the tight junction. The protein resides in the lateral cell membrane. The protein localises to the apical cell membrane. This chain is Transmembrane protein 114, found in Mus musculus (Mouse).